A 477-amino-acid chain; its full sequence is Methylenetetrahydrofolate--tRNA-(uracil-5-)-methyltransferase TrmFO (477 aa).

FAD is bound at residue 14-19 (GGGLAG).

Belongs to the MnmG family. TrmFO subfamily. The cofactor is FAD.

Its subcellular location is the cytoplasm. The catalysed reaction is uridine(54) in tRNA + (6R)-5,10-methylene-5,6,7,8-tetrahydrofolate + NADH + H(+) = 5-methyluridine(54) in tRNA + (6S)-5,6,7,8-tetrahydrofolate + NAD(+). The enzyme catalyses uridine(54) in tRNA + (6R)-5,10-methylene-5,6,7,8-tetrahydrofolate + NADPH + H(+) = 5-methyluridine(54) in tRNA + (6S)-5,6,7,8-tetrahydrofolate + NADP(+). Catalyzes the folate-dependent formation of 5-methyl-uridine at position 54 (M-5-U54) in all tRNAs. The protein is Methylenetetrahydrofolate--tRNA-(uracil-5-)-methyltransferase TrmFO of Rhizobium etli (strain ATCC 51251 / DSM 11541 / JCM 21823 / NBRC 15573 / CFN 42).